The primary structure comprises 484 residues: Glycogen synthase (484 aa).

An ADP-alpha-D-glucose-binding site is contributed by Lys-15.

Belongs to the glycosyltransferase 1 family. Bacterial/plant glycogen synthase subfamily.

The enzyme catalyses [(1-&gt;4)-alpha-D-glucosyl](n) + ADP-alpha-D-glucose = [(1-&gt;4)-alpha-D-glucosyl](n+1) + ADP + H(+). Its pathway is glycan biosynthesis; glycogen biosynthesis. Functionally, synthesizes alpha-1,4-glucan chains using ADP-glucose. The polypeptide is Glycogen synthase (Anoxybacillus flavithermus (strain DSM 21510 / WK1)).